Here is a 344-residue protein sequence, read N- to C-terminus: Phosphoribosylformylglycinamidine cyclo-ligase (344 aa).

It belongs to the AIR synthase family.

Its subcellular location is the cytoplasm. The catalysed reaction is 2-formamido-N(1)-(5-O-phospho-beta-D-ribosyl)acetamidine + ATP = 5-amino-1-(5-phospho-beta-D-ribosyl)imidazole + ADP + phosphate + H(+). It functions in the pathway purine metabolism; IMP biosynthesis via de novo pathway; 5-amino-1-(5-phospho-D-ribosyl)imidazole from N(2)-formyl-N(1)-(5-phospho-D-ribosyl)glycinamide: step 2/2. The polypeptide is Phosphoribosylformylglycinamidine cyclo-ligase (Bifidobacterium animalis subsp. lactis (strain AD011)).